The primary structure comprises 619 residues: ETS-related transcription factor Elf-1 (619 aa).

Ser110, Ser163, Ser167, and Ser168 each carry phosphoserine. Residues 158–199 (EKYADSPGASSPEQPKRKKGRKTKPPRPDSPATTPNISVKKK) form a disordered region. Over residues 173-182 (KRKKGRKTKP) the composition is skewed to basic residues. Ser187 bears the Phosphoserine mark. A Phosphothreonine modification is found at Thr190. Positions 208–290 (IYLWEFLLAL…EGQRLVYQFK (83 aa)) form a DNA-binding region, ETS. The interval 300-366 (NDEDPSSSIE…DPVEVAQPSE (67 aa)) is disordered. Residues 305–321 (SSSIESSDPSLSSSATS) are compositionally biased toward low complexity. Residues 322–335 (NRNQTSRSRVSSSP) show a composition bias toward polar residues. Ser432 bears the Phosphoserine mark. Residues 564 to 592 (TLTQEVEKKESEDHLKENTEKTEQQPQPY) form a disordered region. Residues 568 to 586 (EVEKKESEDHLKENTEKTE) show a composition bias toward basic and acidic residues.

Belongs to the ETS family. Binds to the underphosphorylated form of RB. May interact with other transcription factors in order to regulate specific genes. Interacts with RUNX1. As to expression, in fetal tissues, it is highly expressed in heart, lung liver and kidney, and weakly expressed in brain. In adult, it is highly expressed in pancreas, spleen, thymus and peripheral blood leukocytes, expressed at moderate levels in heart, placenta, lung, liver, skeletal muscle, kidney, prostate, ovary, small intestine and colon, and weakly expressed in brain and testis.

It is found in the nucleus. Functionally, transcription factor that activates the LYN and BLK promoters. Appears to be required for the T-cell-receptor-mediated trans activation of HIV-2 gene expression. Binds specifically to two purine-rich motifs in the HIV-2 enhancer. The protein is ETS-related transcription factor Elf-1 (ELF1) of Homo sapiens (Human).